The sequence spans 697 residues: uncharacterized protein (697 aa).

Residues 24–51 constitute a DNA-binding region (zn(2)-C6 fungal-type); that stretch reads CIRCRQKKIKCSGEKPSCQACSNNKVEC. A helical transmembrane segment spans residues 500-520; the sequence is YIMSPFVGFSILTAATIHMLL.

The protein resides in the nucleus membrane. This is an uncharacterized protein from Schizosaccharomyces pombe (strain 972 / ATCC 24843) (Fission yeast).